The primary structure comprises 158 residues: Botcinic acid biosynthesis cluster B protein 16 (158 aa).

It participates in polyketide biosynthesis. Functionally, part of the gene cluster B that mediates the biosynthesis of botcinic acid and its botcinin derivatives, acetate-derived polyketides that contribute to virulence when combined with the sesquiterpene botrydial. Botcinic acid and its derivatives have been shown to induce chlorosis and necrosis during host plant infection, but also have antifungal activities. Two polyketide synthases, BOA6 and BOA9, are involved in the biosynthesis of botcinins. BOA6 mediates the formation of the per-methylated tetraketide core by condensation of four units of malonyl-CoA with one unit of acetyl-CoA, which would be methylated in activated methylene groups to yield a bicyclic acid intermediate that could then either be converted to botrylactone derivatives or lose the starter acetate unit through a retro-Claisen type C-C bond cleavage to yield botcinin derivatives. The second polyketide synthase, BOA9, is probably required for the biosynthesis of the tetraketide side chain of botcinins. The methyltransferase (MT) domain within BOA6 is probably responsible for the incorporation of four methyl groups. The trans-enoyl reductase BOA5 might take over the enoyl reductase function of BOA6 that misses an ER domain. The monooxygenases BOA2, BOA3 and BOA4 might be involved in further hydroxylations at C4, C5 and C8, whereas BOA7, close to BOA9, could potentially be involved in the hydroxylation at C4 in the side chain of botcinins. The polypeptide is Botcinic acid biosynthesis cluster B protein 16 (Botryotinia fuckeliana (strain B05.10) (Noble rot fungus)).